A 585-amino-acid chain; its full sequence is Aspartate--tRNA ligase (585 aa).

Glu-173 lines the L-aspartate pocket. Residues 197–200 (QTLK) form an aspartate region. L-aspartate is bound at residue Arg-219. Residues 219–221 (RDE) and Gln-228 each bind ATP. His-446 contacts L-aspartate. Glu-480 serves as a coordination point for ATP. Arg-487 contacts L-aspartate. 532–535 (GLDR) contacts ATP.

The protein belongs to the class-II aminoacyl-tRNA synthetase family. Type 1 subfamily. Homodimer.

The protein resides in the cytoplasm. It catalyses the reaction tRNA(Asp) + L-aspartate + ATP = L-aspartyl-tRNA(Asp) + AMP + diphosphate. Catalyzes the attachment of L-aspartate to tRNA(Asp) in a two-step reaction: L-aspartate is first activated by ATP to form Asp-AMP and then transferred to the acceptor end of tRNA(Asp). This is Aspartate--tRNA ligase from Parabacteroides distasonis (strain ATCC 8503 / DSM 20701 / CIP 104284 / JCM 5825 / NCTC 11152).